Consider the following 514-residue polypeptide: Membrane-bound lytic murein transglycosylase F (514 aa).

An N-terminal signal peptide occupies residues 1-30; it reads MKKLKINYLFIGILTLLLAAALWPSIPWFG. Residues 31-269 are non-LT domain; it reads KTENHIAAIQ…RIEEKYLGHG (239 aa). An LT domain region spans residues 270-514; that stretch reads DDFDYVDTRS…LFTPQKKEEK (245 aa). E314 is an active-site residue.

It in the N-terminal section; belongs to the bacterial solute-binding protein 3 family. This sequence in the C-terminal section; belongs to the transglycosylase Slt family.

It is found in the cell outer membrane. The enzyme catalyses Exolytic cleavage of the (1-&gt;4)-beta-glycosidic linkage between N-acetylmuramic acid (MurNAc) and N-acetylglucosamine (GlcNAc) residues in peptidoglycan, from either the reducing or the non-reducing ends of the peptidoglycan chains, with concomitant formation of a 1,6-anhydrobond in the MurNAc residue.. Functionally, murein-degrading enzyme that degrades murein glycan strands and insoluble, high-molecular weight murein sacculi, with the concomitant formation of a 1,6-anhydromuramoyl product. Lytic transglycosylases (LTs) play an integral role in the metabolism of the peptidoglycan (PG) sacculus. Their lytic action creates space within the PG sacculus to allow for its expansion as well as for the insertion of various structures such as secretion systems and flagella. This Salmonella choleraesuis (strain SC-B67) protein is Membrane-bound lytic murein transglycosylase F.